A 428-amino-acid polypeptide reads, in one-letter code: Trigger factor (428 aa).

In terms of domain architecture, PPIase FKBP-type spans 163–248 (GDTVVIDFEG…VHEVKAKQLP (86 aa)).

This sequence belongs to the FKBP-type PPIase family. Tig subfamily.

It localises to the cytoplasm. The catalysed reaction is [protein]-peptidylproline (omega=180) = [protein]-peptidylproline (omega=0). In terms of biological role, involved in protein export. Acts as a chaperone by maintaining the newly synthesized protein in an open conformation. Functions as a peptidyl-prolyl cis-trans isomerase. The protein is Trigger factor of Geobacillus kaustophilus (strain HTA426).